A 351-amino-acid chain; its full sequence is Probable dual-specificity RNA methyltransferase RlmN (351 aa).

Glutamate 92 functions as the Proton acceptor in the catalytic mechanism. Positions 98 to 332 (TDQRLTVCIS…VSLRASRGLD (235 aa)) constitute a Radical SAM core domain. Residues cysteine 105 and cysteine 337 are joined by a disulfide bond. Positions 112, 116, and 119 each coordinate [4Fe-4S] cluster. S-adenosyl-L-methionine contacts are provided by residues 159-160 (GE), serine 189, 218-220 (SLH), and asparagine 294. Cysteine 337 acts as the S-methylcysteine intermediate in catalysis.

Belongs to the radical SAM superfamily. RlmN family. Requires [4Fe-4S] cluster as cofactor.

The protein localises to the cytoplasm. The enzyme catalyses adenosine(2503) in 23S rRNA + 2 reduced [2Fe-2S]-[ferredoxin] + 2 S-adenosyl-L-methionine = 2-methyladenosine(2503) in 23S rRNA + 5'-deoxyadenosine + L-methionine + 2 oxidized [2Fe-2S]-[ferredoxin] + S-adenosyl-L-homocysteine. It carries out the reaction adenosine(37) in tRNA + 2 reduced [2Fe-2S]-[ferredoxin] + 2 S-adenosyl-L-methionine = 2-methyladenosine(37) in tRNA + 5'-deoxyadenosine + L-methionine + 2 oxidized [2Fe-2S]-[ferredoxin] + S-adenosyl-L-homocysteine. In terms of biological role, specifically methylates position 2 of adenine 2503 in 23S rRNA and position 2 of adenine 37 in tRNAs. The sequence is that of Probable dual-specificity RNA methyltransferase RlmN from Synechococcus sp. (strain CC9902).